Consider the following 819-residue polypeptide: uncharacterized protein (819 aa).

Residue Ser16 is modified to Phosphoserine. Disordered stretches follow at residues 28-83 (SNTQ…PPTV) and 96-134 (PTFTLSVSPDSQSSSATHQNDYISSPHADFSFSPPASKI). Residues 36–63 (KIRFTENENDLSPERAQKEPVSIPHGRY) constitute a DNA-binding region (zn(2)-C6 fungal-type). 2 stretches are compositionally biased toward polar residues: residues 64 to 77 (TWSTSPDTDSSHLP) and 96 to 118 (PTFTLSVSPDSQSSSATHQNDYI).

Its subcellular location is the nucleus. This is an uncharacterized protein from Schizosaccharomyces pombe (strain 972 / ATCC 24843) (Fission yeast).